The following is a 199-amino-acid chain: Dephospho-CoA kinase (199 aa).

The DPCK domain occupies 3 to 199 (VLGLTGSIGM…AAAKMPRRRD (197 aa)). 11–16 (GMGKST) lines the ATP pocket.

It belongs to the CoaE family.

The protein resides in the cytoplasm. The enzyme catalyses 3'-dephospho-CoA + ATP = ADP + CoA + H(+). The protein operates within cofactor biosynthesis; coenzyme A biosynthesis; CoA from (R)-pantothenate: step 5/5. Catalyzes the phosphorylation of the 3'-hydroxyl group of dephosphocoenzyme A to form coenzyme A. The protein is Dephospho-CoA kinase of Rhodopseudomonas palustris (strain ATCC BAA-98 / CGA009).